A 207-amino-acid polypeptide reads, in one-letter code: Small ribosomal subunit protein uS4 (207 aa).

Positions 31 to 54 are disordered; it reads KCKLDSKPGQHGRTSGARTSDYGN. A compositionally biased stretch (polar residues) spans 42 to 53; the sequence is GRTSGARTSDYG. The S4 RNA-binding domain maps to 97–160; it reads SRLDNVVYRM…KKQVRIAEAL (64 aa).

This sequence belongs to the universal ribosomal protein uS4 family. As to quaternary structure, part of the 30S ribosomal subunit. Contacts protein S5. The interaction surface between S4 and S5 is involved in control of translational fidelity.

Its function is as follows. One of the primary rRNA binding proteins, it binds directly to 16S rRNA where it nucleates assembly of the body of the 30S subunit. Functionally, with S5 and S12 plays an important role in translational accuracy. The chain is Small ribosomal subunit protein uS4 from Cupriavidus metallidurans (strain ATCC 43123 / DSM 2839 / NBRC 102507 / CH34) (Ralstonia metallidurans).